The chain runs to 1029 residues: Beta-galactosidase (1029 aa).

Substrate-binding residues include Asn108 and Asp207. Asp207 serves as a coordination point for Na(+). 3 residues coordinate Mg(2+): Glu422, His424, and Glu467. Substrate-binding positions include Glu467 and 543 to 546 (EYAH). Catalysis depends on Glu467, which acts as the Proton donor. The active-site Nucleophile is Glu543. Asn603 is a binding site for Mg(2+). 2 residues coordinate Na(+): Phe607 and Asn610. Positions 610 and 1005 each coordinate substrate.

Belongs to the glycosyl hydrolase 2 family. Homotetramer. Mg(2+) is required as a cofactor. Na(+) serves as cofactor.

It carries out the reaction Hydrolysis of terminal non-reducing beta-D-galactose residues in beta-D-galactosides.. This is Beta-galactosidase from Escherichia coli.